Reading from the N-terminus, the 404-residue chain is Cysteine desulfurase IscS (404 aa).

Pyridoxal 5'-phosphate is bound by residues 75–76, Asn155, Gln183, and 203–205; these read AT and SAH. Lys206 is subject to N6-(pyridoxal phosphate)lysine. Pyridoxal 5'-phosphate is bound at residue Thr243. Cys328 functions as the Cysteine persulfide intermediate in the catalytic mechanism. Cys328 is a [2Fe-2S] cluster binding site.

This sequence belongs to the class-V pyridoxal-phosphate-dependent aminotransferase family. NifS/IscS subfamily. As to quaternary structure, homodimer. Forms a heterotetramer with IscU, probably interacts with other sulfur acceptors. Pyridoxal 5'-phosphate is required as a cofactor.

Its subcellular location is the cytoplasm. The enzyme catalyses (sulfur carrier)-H + L-cysteine = (sulfur carrier)-SH + L-alanine. It functions in the pathway cofactor biosynthesis; iron-sulfur cluster biosynthesis. Inhibited by equimolar N-iodoacetyl-N'-(5-sulfo-1-naphthyl)ethylenediamine. Its function is as follows. Master enzyme that delivers sulfur to a number of partners involved in Fe-S cluster assembly, tRNA modification or cofactor biosynthesis. Catalyzes the removal of elemental sulfur from cysteine to produce alanine via an enzyme-bound persulfide intermediate. Functions as a sulfur delivery protein for Fe-S cluster synthesis. Cluster assembly on IscU homodimers proceeds sequentially from 1 2Fe-2S per dimer, to 2 2Fe-2S per dimer and finally 1 4Fe-4S per dimer. The chain is Cysteine desulfurase IscS from Azotobacter vinelandii.